The chain runs to 369 residues: UDP-N-acetylglucosamine--N-acetylmuramyl-(pentapeptide) pyrophosphoryl-undecaprenol N-acetylglucosamine transferase (369 aa).

UDP-N-acetyl-alpha-D-glucosamine contacts are provided by residues 15-17 (TGG), asparagine 126, arginine 169, serine 197, and glutamine 299.

The protein belongs to the glycosyltransferase 28 family. MurG subfamily.

The protein localises to the cell inner membrane. The catalysed reaction is di-trans,octa-cis-undecaprenyl diphospho-N-acetyl-alpha-D-muramoyl-L-alanyl-D-glutamyl-meso-2,6-diaminopimeloyl-D-alanyl-D-alanine + UDP-N-acetyl-alpha-D-glucosamine = di-trans,octa-cis-undecaprenyl diphospho-[N-acetyl-alpha-D-glucosaminyl-(1-&gt;4)]-N-acetyl-alpha-D-muramoyl-L-alanyl-D-glutamyl-meso-2,6-diaminopimeloyl-D-alanyl-D-alanine + UDP + H(+). The protein operates within cell wall biogenesis; peptidoglycan biosynthesis. In terms of biological role, cell wall formation. Catalyzes the transfer of a GlcNAc subunit on undecaprenyl-pyrophosphoryl-MurNAc-pentapeptide (lipid intermediate I) to form undecaprenyl-pyrophosphoryl-MurNAc-(pentapeptide)GlcNAc (lipid intermediate II). The polypeptide is UDP-N-acetylglucosamine--N-acetylmuramyl-(pentapeptide) pyrophosphoryl-undecaprenol N-acetylglucosamine transferase (Methylorubrum extorquens (strain PA1) (Methylobacterium extorquens)).